We begin with the raw amino-acid sequence, 211 residues long: Homeobox protein Rhox5 (211 aa).

The disordered stretch occupies residues 38 to 129 (FFQAGEGRDE…PLRRPGSTQR (92 aa)). Gly residues-rich tracts occupy residues 52-62 (GQPGEGAVGTE) and 70-84 (GGEGHFGPGVPGPVG). Basic and acidic residues predominate over residues 102–119 (HEPVAEGTESVKSEDKQM). Residues 119 to 176 (MPLRRPGSTQRRLAELERILLSSGSSSGGRSLIDGWISVCPECRNWFKIRRAAYRRNR) constitute a DNA-binding region (homeobox; atypical).

As to expression, highly expressed in placenta. Lower levels in testis, epididymis, ovary and skeletal muscle.

The protein localises to the nucleus. In terms of biological role, transcription factor required for differentiation of embryonic stem cells (ESCs) into primordial germ cells. The polypeptide is Homeobox protein Rhox5 (Rhox5) (Rattus norvegicus (Rat)).